We begin with the raw amino-acid sequence, 369 residues long: Phenylalanine--tRNA ligase alpha subunit (369 aa).

Position 270 (glutamate 270) interacts with Mg(2+).

The protein belongs to the class-II aminoacyl-tRNA synthetase family. Phe-tRNA synthetase alpha subunit type 1 subfamily. As to quaternary structure, tetramer of two alpha and two beta subunits. It depends on Mg(2+) as a cofactor.

Its subcellular location is the cytoplasm. It catalyses the reaction tRNA(Phe) + L-phenylalanine + ATP = L-phenylalanyl-tRNA(Phe) + AMP + diphosphate + H(+). The sequence is that of Phenylalanine--tRNA ligase alpha subunit from Phenylobacterium zucineum (strain HLK1).